A 398-amino-acid chain; its full sequence is Aspartic protease 3 (398 aa).

Positions 1-17 (MSGRVFLLLALVALASA) are cleaved as a signal peptide. The propeptide at 18 to 55 (IQRIKLEKRTYTREQYKFGSIQEHLKAKYVPGYIPNKD) is removed in mature form. In terms of domain architecture, Peptidase A1 spans 69–392 (YYGPVTIGTP…DHGNKRVGFA (324 aa)). The active site involves aspartate 87. Residues cysteine 100 and cysteine 107 are joined by a disulfide bond. Residue aspartate 279 is part of the active site. Cysteine 313 and cysteine 351 form a disulfide bridge. Asparagine 321 carries an N-linked (GlcNAc...) asparagine glycan.

The protein belongs to the peptidase A1 family. As to expression, highly expressed in intestine and to a lower extent in body wall muscles, hypodermis and neurons.

It localises to the cytoplasm. Its subcellular location is the lysosome. The protein localises to the secreted. Functionally, aspartic protease. Part of the necrosis cell death pathway. Involved in neuronal cell degeneration. Involved in heat stress response. The sequence is that of Aspartic protease 3 from Caenorhabditis elegans.